Reading from the N-terminus, the 570-residue chain is Mitogen-activated protein kinase 11 (570 aa).

The Protein kinase domain maps to 26–317 (YEVLEVIGKG…AQEALADPYF (292 aa)). ATP-binding positions include 32 to 40 (IGKGSYGLV) and Lys-55. The active-site Proton acceptor is Asp-152. At Thr-188 the chain carries Phosphothreonine. A TXY motif is present at residues 188–190 (TDY). A Phosphotyrosine modification is found at Tyr-190.

The protein belongs to the protein kinase superfamily. CMGC Ser/Thr protein kinase family. MAP kinase subfamily. In terms of processing, dually phosphorylated on Thr-188 and Tyr-190, which activates the enzyme.

The enzyme catalyses L-seryl-[protein] + ATP = O-phospho-L-seryl-[protein] + ADP + H(+). The catalysed reaction is L-threonyl-[protein] + ATP = O-phospho-L-threonyl-[protein] + ADP + H(+). Activated by threonine and tyrosine phosphorylation. This chain is Mitogen-activated protein kinase 11 (MPK11), found in Oryza sativa subsp. japonica (Rice).